The chain runs to 411 residues: Na(+)-translocating NADH-quinone reductase subunit F (411 aa).

A helical transmembrane segment spans residues 6 to 26; it reads AIGGVAMFTLIIMGLVAIILA. The 2Fe-2S ferredoxin-type domain occupies 35-129; that stretch reads GDVTIHINDN…DMKIEIDPEF (95 aa). [2Fe-2S] cluster contacts are provided by Cys72, Cys78, Cys81, and Cys113. The FAD-binding FR-type domain maps to 132 to 273; sequence VQKWECEVIS…SGPYGEFFAK (142 aa).

Belongs to the NqrF family. In terms of assembly, composed of six subunits; NqrA, NqrB, NqrC, NqrD, NqrE and NqrF. Requires [2Fe-2S] cluster as cofactor. It depends on FAD as a cofactor.

The protein localises to the cell inner membrane. It catalyses the reaction a ubiquinone + n Na(+)(in) + NADH + H(+) = a ubiquinol + n Na(+)(out) + NAD(+). In terms of biological role, NQR complex catalyzes the reduction of ubiquinone-1 to ubiquinol by two successive reactions, coupled with the transport of Na(+) ions from the cytoplasm to the periplasm. The first step is catalyzed by NqrF, which accepts electrons from NADH and reduces ubiquinone-1 to ubisemiquinone by a one-electron transfer pathway. The protein is Na(+)-translocating NADH-quinone reductase subunit F of Psychrobacter cryohalolentis (strain ATCC BAA-1226 / DSM 17306 / VKM B-2378 / K5).